The sequence spans 788 residues: Ciliated left-right organizer metallopeptidase (788 aa).

Positions 1–20 (MLLLLLLLLLLPPLVLRVAA) are cleaved as a signal peptide. The Extracellular segment spans residues 21 to 735 (SRCLHDETQK…DHNPSMTHLR (715 aa)). Low complexity predominate over residues 40 to 56 (SQLPSKSRSSSLTLPSS). A disordered region spans residues 40-59 (SQLPSKSRSSSLTLPSSRDP). His305 lines the Zn(2+) pocket. Glu306 is an active-site residue. His309 lines the Zn(2+) pocket. Asn333 is a glycosylation site (N-linked (GlcNAc...) asparagine). His385 is a binding site for Zn(2+). Residues Asn425, Asn491, Asn524, and Asn713 are each glycosylated (N-linked (GlcNAc...) asparagine). Residues 736-756 (LSMGLCLMLLILVGVMGTTAY) traverse the membrane as a helical segment. The Cytoplasmic portion of the chain corresponds to 757–788 (QKRATLPVRPSASYHSPELHSTRVPVRGIREV). The interval 767–788 (SASYHSPELHSTRVPVRGIREV) is disordered.

The protein belongs to the peptidase M8 family. Zn(2+) is required as a cofactor.

It localises to the membrane. Its function is as follows. Putative metalloproteinase that plays a role in left-right patterning process. In Homo sapiens (Human), this protein is Ciliated left-right organizer metallopeptidase.